The sequence spans 311 residues: MAKLAEEMNPEGSRYQLLLSCPSGLSPSQVSVDFSKSHDRIPRQDPGLEDSISQVWEQRSQGNSSLFNGQKFRYGGYCLDDDDGSTNEVPHVCLRLGLTDYRTFVGTNLSSLWEKFLVTSEDDSVRCRHTSSPLGNGAVIETSDKKIIVLRRSNNVGEFPGHYVFPGGHPEPTAVGIDYHQLENNVQTGEVLNKKVTQEMFDSIICEVVEETGIPASSLSSPLFIGISRRELNVRPAMFFYLKCSHHSDDIQRLYSSAEDGFESTQLHTVSLDELKMMTSRMPGCHHGGFALYELMLQRLKNTKETSLIAT.

A Nudix hydrolase domain is found at 131 to 298 (SSPLGNGAVI…GFALYELMLQ (168 aa)). A Nudix box motif is present at residues 192 to 213 (LNKKVTQEMFDSIICEVVEETG). Residues E207 and E211 each coordinate Mg(2+).

This sequence belongs to the Nudix hydrolase family. The cofactor is Mg(2+). It depends on Mn(2+) as a cofactor. As to expression, expressed in roots, stems and leaves.

Probably mediates the hydrolysis of some nucleoside diphosphate derivatives. The polypeptide is Nudix hydrolase 9 (NUDT9) (Arabidopsis thaliana (Mouse-ear cress)).